The primary structure comprises 385 residues: Ethanolamine kinase 2 (385 aa).

This sequence belongs to the choline/ethanolamine kinase family.

It catalyses the reaction ethanolamine + ATP = phosphoethanolamine + ADP + H(+). The protein operates within phospholipid metabolism; phosphatidylethanolamine biosynthesis; phosphatidylethanolamine from ethanolamine: step 1/3. Highly specific for ethanolamine phosphorylation. Does not have choline kinase activity. The chain is Ethanolamine kinase 2 (Etnk2) from Rattus norvegicus (Rat).